Reading from the N-terminus, the 2563-residue chain is Highly reducing polyketide synthase 2 (2563 aa).

Positions 11–451 constitute a Ketosynthase family 3 (KS3) domain; sequence MSDIAIVGYS…GSNSHIVLDD (441 aa). Residues Cys-182, His-317, and His-357 each act as for beta-ketoacyl synthase activity in the active site. The region spanning 589–890 is the Malonyl-CoA:ACP transacylase (MAT) domain; sequence FAFTGQGAQY…DTLSEMSSAS (302 aa). Positions 970-1101 are N-terminal hotdog fold; it reads GELLGVRVSD…ANISVEFQDN (132 aa). The region spanning 970–1269 is the PKS/mFAS DH domain; it reads GELLGVRVSD…TSAVSGGITH (300 aa). Residue His-1002 is the Proton acceptor; for dehydratase activity of the active site. The segment at 1126-1269 is C-terminal hotdog fold; the sequence is TLPIDPRVFY…TSAVSGGITH (144 aa). Asp-1186 acts as the Proton donor; for dehydratase activity in catalysis. The tract at residues 1296–1618 is methyltransferase (CMet) domain; the sequence is FAANAVPKDD…FSGNDLVIRD (323 aa). An Enoyl reductase (ER) domain is found at 1858–2168; sequence GSLDSLQFVE…QEDTSERVIV (311 aa). The Ketoreductase (KR) domain occupies 2192 to 2370; it reads STYLVAGGSG…ALSLDIGWMS (179 aa). The Carrier domain maps to 2480–2561; sequence SDARERQQVV…GVAEVVEARS (82 aa). Position 2521 is an O-(pantetheine 4'-phosphoryl)serine (Ser-2521).

Requires pantetheine 4'-phosphate as cofactor.

It participates in secondary metabolite biosynthesis. Its function is as follows. Highly reducing polyketide synthase; part of the gene cluster that mediates the biosynthesis of the tetraketides fugralins such as linear fugralin A and cyclic fugralin B, volatile compounds that play a role in the asexual reproductive cycle but are not involved in pathogenicity. One of the key features of fugralins is the presence of a double methyl group, which is only rarely encountered in fungal secondary metabolites. As the fugralins cluster does not contain an independent methyltransferase, the PKS FGR1 is probably responsible for adding two methyl groups to the same carbon atom. Fugralin B is similar to fugralin A except for a cyclization between the carboxylic acid C-8 and the alcohol on C-4 resulting in a six membered lactone ring, probably catalyzed by the cyclase FGR4. The exact role of the individual cluster genes remains unknown and further work is needed to unravel the biosynthetic pathway. This chain is Highly reducing polyketide synthase 2, found in Gibberella zeae (strain ATCC MYA-4620 / CBS 123657 / FGSC 9075 / NRRL 31084 / PH-1) (Wheat head blight fungus).